Reading from the N-terminus, the 309-residue chain is Ribonuclease Z (309 aa).

Zn(2+) is bound by residues His63, His65, Asp67, His68, His145, Asp216, and His274. Catalysis depends on Asp67, which acts as the Proton acceptor.

The protein belongs to the RNase Z family. In terms of assembly, homodimer. Zn(2+) serves as cofactor.

It catalyses the reaction Endonucleolytic cleavage of RNA, removing extra 3' nucleotides from tRNA precursor, generating 3' termini of tRNAs. A 3'-hydroxy group is left at the tRNA terminus and a 5'-phosphoryl group is left at the trailer molecule.. In terms of biological role, zinc phosphodiesterase, which displays some tRNA 3'-processing endonuclease activity. Probably involved in tRNA maturation, by removing a 3'-trailer from precursor tRNA. The chain is Ribonuclease Z from Streptococcus pyogenes serotype M1.